The following is a 670-amino-acid chain: Thrombospondin-type laminin G domain and EAR repeat-containing protein (670 aa).

Residues 1 to 20 (MSALLMLCAVLLLLGTPSRG) form the signal peptide. In terms of domain architecture, Laminin G-like spans 59–278 (GLQFSATEPR…KVTLGSRPPC (220 aa)). EAR repeat units lie at residues 314–359 (DYVE…KWTD), 361–409 (KFVS…KWSP), 413–461 (KFTL…RWNP), 465–513 (LFEA…IWLV), 515–571 (AFQL…ELNI), 575–623 (TFVK…RWQG), and 626–669 (GFVA…KLRT). The N-linked (GlcNAc...) asparagine glycan is linked to N498.

As to expression, in the organ of Corti, expression at postnatal day 1 (P1) is restricted to the basal region of the stereocilia of inner and outer hair cells (at protein level). Expressed in the organ of Corti at P1 and P7, in cochlear ganglion, stria vascularis and vestibular ends at P7, and in inferior colliculus, remaining brainstem, cerebellum, brain hemispheres and retina at P1, P7 and in the adult. Also detected in adult liver, lung, kidney, intestine and testis but not in heart or skeletal muscle.

It is found in the secreted. The protein resides in the cell surface. It localises to the cell projection. The protein localises to the stereocilium. In terms of biological role, plays a critical role in tooth and hair follicle morphogenesis through regulation of the Notch signaling pathway. May play a role in development or function of the auditory system. This Mus musculus (Mouse) protein is Thrombospondin-type laminin G domain and EAR repeat-containing protein.